We begin with the raw amino-acid sequence, 266 residues long: Putative carbamate hydrolase RutD (266 aa).

The AB hydrolase-1 domain occupies 14 to 115; that stretch reads PVVVLISGLG…TMLVSVNGWL (102 aa).

The protein belongs to the AB hydrolase superfamily. Hydrolase RutD family.

The catalysed reaction is carbamate + 2 H(+) = NH4(+) + CO2. Involved in pyrimidine catabolism. May facilitate the hydrolysis of carbamate, a reaction that can also occur spontaneously. The polypeptide is Putative carbamate hydrolase RutD (Shigella flexneri serotype 5b (strain 8401)).